Reading from the N-terminus, the 462-residue chain is Glycerol-3-phosphate dehydrogenase [NAD(+)] GPDHC1, cytosolic (462 aa).

NAD(+) contacts are provided by residues 48-53, K196, and A235; that span reads GAGAWG. K196 is a binding site for substrate. K285 functions as the Proton acceptor in the catalytic mechanism. Residues R347 and Q375 each coordinate NAD(+). 347-348 contacts substrate; the sequence is RN.

This sequence belongs to the NAD-dependent glycerol-3-phosphate dehydrogenase family. Expressed in roots, leaves, flowers and siliques.

The protein resides in the cytoplasm. Its subcellular location is the cytosol. It catalyses the reaction sn-glycerol 3-phosphate + NAD(+) = dihydroxyacetone phosphate + NADH + H(+). Its function is as follows. Involved in cell redox homeostasis. Required for maintaining a steady state cellular NADH/NAD(+) ratio through a mitochondrial glycerol-3-phosphate redox shuttle. May function with the mitochondrial FAD-dependent glycerol-3-phosphate dehydrogenase SDP6 to shuttle reducing equivalents into the mitochondria for respiration. The chain is Glycerol-3-phosphate dehydrogenase [NAD(+)] GPDHC1, cytosolic (GPDHC1) from Arabidopsis thaliana (Mouse-ear cress).